The following is a 205-amino-acid chain: Holliday junction branch migration complex subunit RuvA (205 aa).

The interval M1–L65 is domain I. Residues D66 to S144 are domain II. Residues L145–N153 are flexible linker. The segment at T154–K205 is domain III.

The protein belongs to the RuvA family. As to quaternary structure, homotetramer. Forms an RuvA(8)-RuvB(12)-Holliday junction (HJ) complex. HJ DNA is sandwiched between 2 RuvA tetramers; dsDNA enters through RuvA and exits via RuvB. An RuvB hexamer assembles on each DNA strand where it exits the tetramer. Each RuvB hexamer is contacted by two RuvA subunits (via domain III) on 2 adjacent RuvB subunits; this complex drives branch migration. In the full resolvosome a probable DNA-RuvA(4)-RuvB(12)-RuvC(2) complex forms which resolves the HJ.

Its subcellular location is the cytoplasm. Functionally, the RuvA-RuvB-RuvC complex processes Holliday junction (HJ) DNA during genetic recombination and DNA repair, while the RuvA-RuvB complex plays an important role in the rescue of blocked DNA replication forks via replication fork reversal (RFR). RuvA specifically binds to HJ cruciform DNA, conferring on it an open structure. The RuvB hexamer acts as an ATP-dependent pump, pulling dsDNA into and through the RuvAB complex. HJ branch migration allows RuvC to scan DNA until it finds its consensus sequence, where it cleaves and resolves the cruciform DNA. The chain is Holliday junction branch migration complex subunit RuvA from Orientia tsutsugamushi (strain Ikeda) (Rickettsia tsutsugamushi).